Reading from the N-terminus, the 351-residue chain is Apolipoprotein L4 (351 aa).

Positions 1 to 21 (MEGAALLKIFVVCIWVQQNHP) are cleaved as a signal peptide.

This sequence belongs to the apolipoprotein L family. As to expression, widely expressed; the highest levels are in spinal cord, placenta, adrenal gland; also detected in spleen, bone marrow, uterus, trachea, mammary gland and testis; levels are low in brain, heart and pancreas.

It localises to the secreted. In terms of biological role, may play a role in lipid exchange and transport throughout the body. May participate in reverse cholesterol transport from peripheral cells to the liver. This Homo sapiens (Human) protein is Apolipoprotein L4 (APOL4).